The chain runs to 927 residues: Translation initiation factor IF-2 (927 aa).

The tract at residues 27-337 is disordered; that stretch reads LGLPVKSHAS…GAPKPVTERK (311 aa). Residues 49-69 are compositionally biased toward polar residues; sequence SFSSSKTKAPTNSVQTNQGVK. 2 stretches are compositionally biased toward basic and acidic residues: residues 70 to 86 and 101 to 138; these read TESKTVETKQGLSDDKP and FKAEREARAKAEAEKRQHNGDHRKNNRHNDTRSDDRRH. Residues 146–159 show a composition bias toward low complexity; it reads GNRNDNRQGQQNNR. 3 stretches are compositionally biased toward basic and acidic residues: residues 160 to 171, 202 to 226, and 234 to 257; these read NKNDGRYADHKQ, YSRHSEQRFREEQEAKRQAAKEQEL, and AQEEAQKAKEKLASKPVAKVKEIV. Over residues 300–316 the composition is skewed to low complexity; it reads NWNNQNQVRNQRNSNWN. In terms of domain architecture, tr-type G spans 428–597; that stretch reads ERPPVVTIMG…LLVAEMEELK (170 aa). The tract at residues 437-444 is G1; that stretch reads GHVDHGKT. A GTP-binding site is contributed by 437 to 444; the sequence is GHVDHGKT. Residues 462 to 466 are G2; it reads GITQH. The interval 483-486 is G3; the sequence is DTPG. GTP is bound by residues 483–487 and 537–540; these read DTPGH and NKID. Residues 537-540 form a G4 region; sequence NKID. Residues 573–575 form a G5 region; that stretch reads SAK.

The protein belongs to the TRAFAC class translation factor GTPase superfamily. Classic translation factor GTPase family. IF-2 subfamily.

The protein localises to the cytoplasm. Its function is as follows. One of the essential components for the initiation of protein synthesis. Protects formylmethionyl-tRNA from spontaneous hydrolysis and promotes its binding to the 30S ribosomal subunits. Also involved in the hydrolysis of GTP during the formation of the 70S ribosomal complex. The sequence is that of Translation initiation factor IF-2 from Streptococcus agalactiae serotype V (strain ATCC BAA-611 / 2603 V/R).